The sequence spans 132 residues: Transcription antitermination protein NusB (132 aa).

Belongs to the NusB family.

Its function is as follows. Involved in transcription antitermination. Required for transcription of ribosomal RNA (rRNA) genes. Binds specifically to the boxA antiterminator sequence of the ribosomal RNA (rrn) operons. The sequence is that of Transcription antitermination protein NusB from Sulfurimonas denitrificans (strain ATCC 33889 / DSM 1251) (Thiomicrospira denitrificans (strain ATCC 33889 / DSM 1251)).